Here is a 532-residue protein sequence, read N- to C-terminus: 2,3-bisphosphoglycerate-independent phosphoglycerate mutase (532 aa).

Residues aspartate 15 and serine 65 each coordinate Mn(2+). The active-site Phosphoserine intermediate is the serine 65. Substrate contacts are provided by residues histidine 126, arginine 156–aspartate 157, arginine 188, arginine 194, arginine 258–arginine 261, and lysine 331. The Mn(2+) site is built by aspartate 398, histidine 402, aspartate 439, histidine 440, and histidine 457.

Belongs to the BPG-independent phosphoglycerate mutase family. In terms of assembly, monomer. Requires Mn(2+) as cofactor.

The enzyme catalyses (2R)-2-phosphoglycerate = (2R)-3-phosphoglycerate. The protein operates within carbohydrate degradation; glycolysis; pyruvate from D-glyceraldehyde 3-phosphate: step 3/5. Its function is as follows. Catalyzes the interconversion of 2-phosphoglycerate and 3-phosphoglycerate. The chain is 2,3-bisphosphoglycerate-independent phosphoglycerate mutase from Gloeothece citriformis (strain PCC 7424) (Cyanothece sp. (strain PCC 7424)).